A 522-amino-acid polypeptide reads, in one-letter code: Maturase K (522 aa).

The protein belongs to the intron maturase 2 family. MatK subfamily.

The protein localises to the plastid. The protein resides in the chloroplast. Usually encoded in the trnK tRNA gene intron. Probably assists in splicing its own and other chloroplast group II introns. This is Maturase K from Schizorhiza neglecta (Lapeirousia neglecta).